A 479-amino-acid chain; its full sequence is UDP-N-acetylmuramate--L-alanine ligase (479 aa).

ATP is bound at residue 126 to 132 (GTHGKTT).

It belongs to the MurCDEF family.

It is found in the cytoplasm. The enzyme catalyses UDP-N-acetyl-alpha-D-muramate + L-alanine + ATP = UDP-N-acetyl-alpha-D-muramoyl-L-alanine + ADP + phosphate + H(+). It functions in the pathway cell wall biogenesis; peptidoglycan biosynthesis. Functionally, cell wall formation. The protein is UDP-N-acetylmuramate--L-alanine ligase of Alkalilimnicola ehrlichii (strain ATCC BAA-1101 / DSM 17681 / MLHE-1).